The primary structure comprises 403 residues: TBC1 domain family member 20 (403 aa).

The disordered stretch occupies residues Met-1–Phe-25. In terms of domain architecture, Rab-GAP TBC spans Leu-60 to His-246. Helical transmembrane passes span Leu-238–Val-258 and Phe-367–Val-387.

(Microbial infection) Directly interacts with the N-terminal amphipathic helix of hepatitis C virus (HCV) NS5A.

The protein resides in the membrane. GTPase-activating protein (GAP) specific for Rab1 and Rab2 small GTPase families for which it can accelerate the intrinsic GTP hydrolysis rate by more than five orders of magnitude. Also shows GAP activity for RAB18 GTPase. Promotes RAB18 dissociation from the endoplasmic reticulum (ER) membrane into the cytosol, probably through stimulating RAB18 GTP-hydrolysis. Involved in maintaining endoplasmic reticulum structure. The chain is TBC1 domain family member 20 from Homo sapiens (Human).